We begin with the raw amino-acid sequence, 715 residues long: Methylmalonyl-CoA mutase large subunit (715 aa).

The (R)-methylmalonyl-CoA site is built by Tyr70, Met73, Arg77, Thr80, Arg82, Tyr84, and Ser109. Cob(II)alamin is bound by residues Phe112 and Ala134. Residues Thr190 and Gln192 each contribute to the (R)-methylmalonyl-CoA site. Positions 201 and 202 each coordinate cob(II)alamin. Residues Arg202, His239, Arg278, and Ser280 each coordinate (R)-methylmalonyl-CoA. Cob(II)alamin-binding residues include Gly328, Glu365, Ala368, Gly599, His600, Asp601, Arg602, Ser645, Leu647, Gly676, and Thr699. The B12-binding domain maps to 587–715 (QPRIMIAKMG…AKVLEILLEE (129 aa)).

This sequence belongs to the methylmalonyl-CoA mutase family. In terms of assembly, heterodimer of an alpha and a beta chain. The cofactor is adenosylcob(III)alamin.

It carries out the reaction (R)-methylmalonyl-CoA = succinyl-CoA. Its function is as follows. Catalyzes the isomerization of succinyl-CoA to methylmalonyl-CoA during synthesis of propionate from tricarboxylic acid-cycle intermediates. The polypeptide is Methylmalonyl-CoA mutase large subunit (mutB) (Porphyromonas gingivalis (strain ATCC BAA-308 / W83)).